The sequence spans 207 residues: Small ribosomal subunit protein uS4c (207 aa).

Residues 92-156 enclose the S4 RNA-binding domain; it reads MRLDNILFRL…YQSIITKRIE (65 aa).

Belongs to the universal ribosomal protein uS4 family. In terms of assembly, part of the 30S ribosomal subunit. Contacts protein S5. The interaction surface between S4 and S5 is involved in control of translational fidelity.

The protein localises to the plastid. The protein resides in the chloroplast. Its function is as follows. One of the primary rRNA binding proteins, it binds directly to 16S rRNA where it nucleates assembly of the body of the 30S subunit. Functionally, with S5 and S12 plays an important role in translational accuracy. This chain is Small ribosomal subunit protein uS4c (rps4), found in Equisetum arvense (Field horsetail).